Consider the following 123-residue polypeptide: Alpha-lactalbumin B/C (123 aa).

Residues 1–123 (KQFTKCQLSQ…KLEQWLCEEL (123 aa)) form the C-type lysozyme domain. Cystine bridges form between Cys-6–Cys-120, Cys-28–Cys-111, Cys-61–Cys-77, and Cys-73–Cys-91. Ca(2+)-binding residues include Lys-79, Asp-82, Asp-84, Asp-87, and Asp-88.

It belongs to the glycosyl hydrolase 22 family. In terms of assembly, lactose synthase (LS) is a heterodimer of a catalytic component, beta1,4-galactosyltransferase (beta4Gal-T1) and a regulatory component, alpha-lactalbumin (LA). Mammary gland specific. Secreted in milk.

The protein resides in the secreted. Regulatory subunit of lactose synthase, changes the substrate specificity of galactosyltransferase in the mammary gland making glucose a good acceptor substrate for this enzyme. This enables LS to synthesize lactose, the major carbohydrate component of milk. In other tissues, galactosyltransferase transfers galactose onto the N-acetylglucosamine of the oligosaccharide chains in glycoproteins. The polypeptide is Alpha-lactalbumin B/C (Equus caballus (Horse)).